Here is a 218-residue protein sequence, read N- to C-terminus: Leucine-rich repeat protein 2 (218 aa).

The first 27 residues, 1–27 (MVAQNSRRELLAASLILTLALIRLTEA), serve as a signal peptide directing secretion. 5 LRR repeats span residues 69 to 93 (HHQV…LGKL), 94 to 117 (EHLQ…LGNL), 119 to 141 (SLIS…LGKL), 142 to 165 (KSLV…LTVI), and 167 to 190 (SLKV…PFEH).

Functionally, probably involved in plant defense response. In Arabidopsis thaliana (Mouse-ear cress), this protein is Leucine-rich repeat protein 2.